Here is a 387-residue protein sequence, read N- to C-terminus: Zinc homeostasis factor 1 (387 aa).

4 consecutive transmembrane segments (helical) span residues 10-30 (IILLLGIDVTFFFIEIITGYA), 34-54 (LALIADSFHMLNDIVSLLVAL), 77-97 (EILGALSNGVFLIALCMFIFM), and 113-133 (TLMFFVGSLGLLSNFVGIFLF). A compositionally biased stretch (polar residues) spans 195–214 (SYTGNHNGAGTSKPVNNHGS). The disordered stretch occupies residues 195–221 (SYTGNHNGAGTSKPVNNHGSIEQDAPK). Helical transmembrane passes span 234 to 254 (FLHVLGDALGNIGVISAALFI) and 263 to 283 (FLFDPCISILLTFIILFSAIP).

It belongs to the cation diffusion facilitator (CDF) transporter (TC 2.A.4) family. SLC30A subfamily.

The protein resides in the endoplasmic reticulum membrane. It localises to the nucleus membrane. In terms of biological role, involved in zinc homeostasis, where it plays a role in its accumulation in the endoplasmic reticulum/nucleus. Also has a role in the sequestration of cadmium into the endoplasmic reticulum. This is Zinc homeostasis factor 1 (zhf1) from Schizosaccharomyces pombe (strain 972 / ATCC 24843) (Fission yeast).